Consider the following 324-residue polypeptide: Arginase (324 aa).

Histidine 115, aspartate 142, histidine 144, and aspartate 146 together coordinate Mn(2+). Substrate-binding positions include 144 to 148 (HTDLH), 155 to 157 (SGN), and aspartate 196. 2 residues coordinate Mn(2+): aspartate 244 and aspartate 246. Residues threonine 258 and glutamate 289 each coordinate substrate.

The protein belongs to the arginase family. Homohexamer. Mn(2+) is required as a cofactor.

It catalyses the reaction L-arginine + H2O = urea + L-ornithine. It participates in nitrogen metabolism; urea cycle; L-ornithine and urea from L-arginine: step 1/1. This chain is Arginase (arcA), found in Agrobacterium fabrum (strain C58 / ATCC 33970) (Agrobacterium tumefaciens (strain C58)).